Reading from the N-terminus, the 138-residue chain is Cysteine desulfuration protein SufE (138 aa).

Cysteine 51 acts as the Cysteine persulfide intermediate in catalysis.

The protein belongs to the SufE family. In terms of assembly, homodimer. Interacts with SufS.

Its subcellular location is the cytoplasm. It functions in the pathway cofactor biosynthesis; iron-sulfur cluster biosynthesis. Functionally, participates in cysteine desulfuration mediated by SufS. Cysteine desulfuration mobilizes sulfur from L-cysteine to yield L-alanine and constitutes an essential step in sulfur metabolism for biosynthesis of a variety of sulfur-containing biomolecules. Functions as a sulfur acceptor for SufS, by mediating the direct transfer of the sulfur atom from the S-sulfanylcysteine of SufS, an intermediate product of cysteine desulfuration process. The sequence is that of Cysteine desulfuration protein SufE from Pectobacterium carotovorum subsp. carotovorum (strain PC1).